Consider the following 600-residue polypeptide: Alpha-N-acetylgalactosaminide alpha-2,6-sialyltransferase 1 (600 aa).

The Cytoplasmic segment spans residues M1 to G14. A helical; Signal-anchor for type II membrane protein transmembrane segment spans residues V15–I35. The Lumenal portion of the chain corresponds to K36 to N600. 2 disordered regions span residues P38 to T191 and G208 to N248. Over residues Q46 to S55 the composition is skewed to basic and acidic residues. Polar residues-rich tracts occupy residues N84–A94, T151–T179, and A209–V219. 2 cysteine pairs are disulfide-bonded: C279–C362 and C365–C533. Residues N300, N311, N331, N375, and N460 are each glycosylated (N-linked (GlcNAc...) asparagine).

The protein belongs to the glycosyltransferase 29 family. Post-translationally, glycosylated; autosialylated. Expression is restricted to the gastrointestinal tract. Highly expressed in goblet cells. Also expressed in various tumor cells.

It localises to the golgi apparatus membrane. It catalyses the reaction a beta-D-galactosyl-(1-&gt;3)-N-acetyl-alpha-D-galactosaminyl derivative + CMP-N-acetyl-beta-neuraminate = a beta-D-galactosyl-(1-&gt;3)-[N-acetyl-alpha-neuraminyl-(2-&gt;6)]-N-acetyl-alpha-D-galactosaminyl derivative + CMP + H(+). The enzyme catalyses a 3-O-[N-acetyl-alpha-D-galactosaminyl]-L-seryl-[protein] + CMP-N-acetyl-beta-neuraminate = a 3-O-[N-acetyl-alpha-neuraminosyl-(2-&gt;6)-N-acetyl-alpha-D-galactosaminyl]-L-seryl-[protein] + CMP + H(+). The catalysed reaction is a 3-O-[N-acetyl-alpha-D-galactosaminyl]-L-threonyl-[protein] + CMP-N-acetyl-beta-neuraminate = a 3-O-[N-acetyl-alpha-neuraminosyl-(2-&gt;6)-N-acetyl-alpha-D-galactosaminyl]-L-threonyl-[protein] + CMP + H(+). It carries out the reaction a 3-O-[beta-D-galactosyl-(1-&gt;3)-N-acetyl-alpha-D-galactosaminyl]-L-seryl-[protein] + CMP-N-acetyl-beta-neuraminate = a 3-O-{beta-D-galactosyl-(1-&gt;3)-[N-acetyl-alpha-neuraminosyl-(2-&gt;6)]-N-acetyl-alpha-D-galactosaminyl}-L-seryl-[protein] + CMP + H(+). It catalyses the reaction a 3-O-[beta-D-galactosyl-(1-&gt;3)-N-acetyl-alpha-D-galactosaminyl]-L-threonyl-[protein] + CMP-N-acetyl-beta-neuraminate = a 3-O-{beta-D-galactosyl-(1-&gt;3)-[N-acetyl-alpha-neuraminosyl-(2-&gt;6)]-N-acetyl-alpha-D-galactosaminyl}-L-threonyl-[protein] + CMP + H(+). The enzyme catalyses a 3-O-[N-acetyl-alpha-neuraminyl-(2-&gt;3)-beta-D-galactosyl-(1-&gt;3)-N-acetyl-alpha-D-galactosaminyl]-L-threonyl-[protein] + CMP-N-acetyl-beta-neuraminate = a 3-O-{alpha-Neu5Ac-(2-&gt;3)-beta-D-Gal-(1-&gt;3)-[alpha-Neu5Ac-(2-&gt;6)]-alpha-D-GalNAc}-L-threonyl-[protein] + CMP + H(+). Its pathway is protein modification; protein glycosylation. Its function is as follows. Protein sialyltransferase specifically expressed in goblet cells that plays a key role in intestinal host-commensal homeostasis. Conjugates sialic acid with an alpha-2-6 linkage to N-acetylgalactosamine (GalNAc) glycan chains linked to serine or threonine in glycoproteins. Catalyzes the formation of the sialyl-Tn (S-Tn) antigen, an antigen found in intestinal goblet cells, as well as ulcerative colitis (UC) and various cancers. Protein sialylation in globlet cells is essential for mucus integrity and is required to protect the intestinal mucus against excessive bacterial proteolytic degradation. The sequence is that of Alpha-N-acetylgalactosaminide alpha-2,6-sialyltransferase 1 from Homo sapiens (Human).